Consider the following 391-residue polypeptide: MNHSNLANPTVSLTVTLIPKHPIRHLTSPIPNRNFTNPKLLFPLRLNETPSSSLAAKRVFIVRATVDGDGKTGNWVNRLPIPGLGAENVFRLISSATGSPIGQFISSPVTFLHSVDPRIKLVWLLTLVVLPARANLVVRLGLVLCTALLSILVLPRQVWIDQLARVSLLSGILFITLGLGSDGAPPMLQSRTPPSSITSLPNLPMSLSGYSYMLLKLGPLQFTRKGLSVGSTAACLTFIIFQSASICLATTTPEQLALALRWFLFPLTYIGVPVSEIILTLLLSLRFINLVFDEVRSVSLGIVSRRVNWQQLTVLETLDIFASFIRRIFKNIFRHAEQISQAMIVRGFRGESSSHKIYFFSGSSNKFADFASVLCLIGVISTALLSEYFLV.

The transit peptide at 1–63 (MNHSNLANPT…LAAKRVFIVR (63 aa)) directs the protein to the chloroplast. The next 5 membrane-spanning stretches (helical) occupy residues 134–154 (ANLVVRLGLVLCTALLSILVL), 168–188 (LLSGILFITLGLGSDGAPPML), 229–249 (VGSTAACLTFIIFQSASICLA), 263–283 (FLFPLTYIGVPVSEIILTLLL), and 370–390 (FASVLCLIGVISTALLSEYFL).

The protein resides in the plastid. It is found in the chloroplast. Its subcellular location is the membrane. In Arabidopsis thaliana (Mouse-ear cress), this protein is Protein ABCI12, chloroplastic (ABCI12).